The primary structure comprises 195 residues: Large ribosomal subunit protein uL5 (195 aa).

This sequence belongs to the universal ribosomal protein uL5 family. In terms of assembly, part of the 50S ribosomal subunit; part of the 5S rRNA/L5/L18/L25 subcomplex. Contacts the 5S rRNA and the P site tRNA. Forms a bridge to the 30S subunit in the 70S ribosome.

In terms of biological role, this is one of the proteins that bind and probably mediate the attachment of the 5S RNA into the large ribosomal subunit, where it forms part of the central protuberance. In the 70S ribosome it contacts protein S13 of the 30S subunit (bridge B1b), connecting the 2 subunits; this bridge is implicated in subunit movement. Contacts the P site tRNA; the 5S rRNA and some of its associated proteins might help stabilize positioning of ribosome-bound tRNAs. The protein is Large ribosomal subunit protein uL5 of Chlorobium chlorochromatii (strain CaD3).